We begin with the raw amino-acid sequence, 238 residues long: Pyridoxine 5'-phosphate synthase (238 aa).

Residues asparagine 7 and arginine 18 each coordinate 3-amino-2-oxopropyl phosphate. The active-site Proton acceptor is the histidine 43. Residues arginine 45 and histidine 50 each coordinate 1-deoxy-D-xylulose 5-phosphate. The active-site Proton acceptor is glutamate 70. Position 100 (threonine 100) interacts with 1-deoxy-D-xylulose 5-phosphate. Histidine 190 (proton donor) is an active-site residue. Residues aspartate 191 and 213 to 214 (GH) each bind 3-amino-2-oxopropyl phosphate.

This sequence belongs to the PNP synthase family. Homooctamer; tetramer of dimers.

It is found in the cytoplasm. The enzyme catalyses 3-amino-2-oxopropyl phosphate + 1-deoxy-D-xylulose 5-phosphate = pyridoxine 5'-phosphate + phosphate + 2 H2O + H(+). It participates in cofactor biosynthesis; pyridoxine 5'-phosphate biosynthesis; pyridoxine 5'-phosphate from D-erythrose 4-phosphate: step 5/5. Its function is as follows. Catalyzes the complicated ring closure reaction between the two acyclic compounds 1-deoxy-D-xylulose-5-phosphate (DXP) and 3-amino-2-oxopropyl phosphate (1-amino-acetone-3-phosphate or AAP) to form pyridoxine 5'-phosphate (PNP) and inorganic phosphate. The chain is Pyridoxine 5'-phosphate synthase from Phocaeicola vulgatus (strain ATCC 8482 / DSM 1447 / JCM 5826 / CCUG 4940 / NBRC 14291 / NCTC 11154) (Bacteroides vulgatus).